Consider the following 419-residue polypeptide: Effector protein BipC (419 aa).

Disordered regions lie at residues 62 to 91 (VAGSGAQRVELARPKPDAQTRATDRRTVSG) and 338 to 402 (LQSG…AKSQ). Composition is skewed to basic and acidic residues over residues 71–91 (ELARPKPDAQTRATDRRTVSG) and 380–392 (TRDEAAHRSREAA).

The protein belongs to the SctB/SipC family.

It localises to the secreted. This is Effector protein BipC (bipC) from Burkholderia pseudomallei (strain 1106a).